The sequence spans 245 residues: Spore membrane assembly protein 1 (245 aa).

Involved in spore and ascus formation. Required for the efficient assembly of the precursors of the prospore membrane to a continuous prospore membrane. The chain is Spore membrane assembly protein 1 (SMA1) from Saccharomyces cerevisiae (strain ATCC 204508 / S288c) (Baker's yeast).